Reading from the N-terminus, the 618-residue chain is MGSRRHKNKQAAPPTLEEFQARKEKKANRKLEKGKRPSTTQGDEVSDRKKKKSKPFKKSRKEEEEVVEEDKDLPEVDLEELSKARKSLFDDEEDDDEAGLVDEELKDEFDLEQEYDYDEDEDNDAHPIFSDDDDEADLEELNAQNMEALSKKLDEEEAEEAEEAEMELVEAENMQPRADILPTEEQEEMMAQETPNLTSTRTRMIEIVKVLENFKTLGAEGRSRGEYVDRLLKDICEYFGYTPFLAEKLFNLFSPAEAMEFFEANEIARPITIRTNTLKTRRRDLAQTLVNRGVNLQPIGSWTKVGLQIFDSQVPIGATPEYLAGHYILQAASSFLPVIALDPHENERILDMAAAPGGKTTYISAMMKNTGCVFANDANKSRTKSLIANIHRLGCTNTIVCNYDAREFPKVIGGFDRILLDAPCSGTGVIGKDQSVKVSRTEKDFIQIPHLQKQLLLSAIDSVDCNSKHGGVIVYSTCSVAVEEDEAVIDYALRKRPNVKLVDTGLAIGKEAFTSYRGKKFHPSVKLARRYYPHTYNVDGFFVAKFQKIGPSSFDDNQASAKEKETAARKEALEEGIIHSDFATFEDEEDDKYIEKSVKNNLLKKGVNPKAKRPSNEK.

The interval 1-132 (MGSRRHKNKQ…NDAHPIFSDD (132 aa)) is disordered. Residues 48 to 59 (RKKKKSKPFKKS) are compositionally biased toward basic residues. Residues 64-79 (EEVVEEDKDLPEVDLE) are compositionally biased toward acidic residues. Positions 80–89 (ELSKARKSLF) are enriched in basic and acidic residues. A compositionally biased stretch (acidic residues) spans 90-123 (DDEEDDDEAGLVDEELKDEFDLEQEYDYDEDEDN). S-adenosyl-L-methionine contacts are provided by residues 353 to 359 (AAAPGGK), aspartate 377, aspartate 404, and aspartate 421. Catalysis depends on cysteine 478, which acts as the Nucleophile. Serine 580 is modified (phosphoserine).

This sequence belongs to the class I-like SAM-binding methyltransferase superfamily. RsmB/NOP family. In terms of assembly, interacts with NOP53. Interacts with TRM112.

The protein resides in the nucleus. It localises to the nucleolus. The catalysed reaction is cytidine(2870) in 25S rRNA + S-adenosyl-L-methionine = 5-methylcytidine(2870) in 25S rRNA + S-adenosyl-L-homocysteine + H(+). Its function is as follows. S-adenosyl-L-methionine-dependent methyltransferase that specifically methylates the C(5) position of cytosine 2870 (m5C2870) in 25S rRNA. Required for 60S ribosomal subunit synthesis and processing. The polypeptide is 25S rRNA (cytosine(2870)-C(5))-methyltransferase (NOP2) (Saccharomyces cerevisiae (strain ATCC 204508 / S288c) (Baker's yeast)).